We begin with the raw amino-acid sequence, 81 residues long: Photosystem I iron-sulfur center (81 aa).

4Fe-4S ferredoxin-type domains are found at residues 2-31 (AHSVKVYDTCIGCTQCVRACPCDVLEMVPW) and 39-68 (IASAPRTEDCIGCKRCETACPTDFLSVRVY). Residues C11, C14, C17, C21, C48, C51, C54, and C58 each contribute to the [4Fe-4S] cluster site.

As to quaternary structure, the eukaryotic PSI reaction center is composed of at least 11 subunits. Requires [4Fe-4S] cluster as cofactor.

Its subcellular location is the plastid. The protein localises to the chloroplast thylakoid membrane. It catalyses the reaction reduced [plastocyanin] + hnu + oxidized [2Fe-2S]-[ferredoxin] = oxidized [plastocyanin] + reduced [2Fe-2S]-[ferredoxin]. Functionally, apoprotein for the two 4Fe-4S centers FA and FB of photosystem I (PSI); essential for photochemical activity. FB is the terminal electron acceptor of PSI, donating electrons to ferredoxin. The C-terminus interacts with PsaA/B/D and helps assemble the protein into the PSI complex. Required for binding of PsaD and PsaE to PSI. PSI is a plastocyanin/cytochrome c6-ferredoxin oxidoreductase, converting photonic excitation into a charge separation, which transfers an electron from the donor P700 chlorophyll pair to the spectroscopically characterized acceptors A0, A1, FX, FA and FB in turn. This Pyropia yezoensis (Susabi-nori) protein is Photosystem I iron-sulfur center.